Here is a 171-residue protein sequence, read N- to C-terminus: Protein FAM209A (171 aa).

A signal peptide spans 1-19 (MWTLKSSLVLLLCLTCSYA). Residues 20–52 (FMFSSLRQKTSEPQGKVQYGEHFRIRQNLPEHT) are Extracellular-facing. Residues 53–73 (QGWLGSKWLWLLFVVVPFVIL) form a helical membrane-spanning segment. Over 74–171 (QCQRDSEKNK…CEIWGEESSS (98 aa)) the chain is Cytoplasmic. Residues 81–107 (KNKEQSPPGLRGGQLHSPLKKKRNASP) form a disordered region. The stretch at 114 to 139 (NTLMELEVELMKFVSKVRNLKRAMAT) forms a coiled coil.

Belongs to the FAM209 family. In terms of assembly, interacts with DPY19L2. Interacts with CYLC1; the interaction may be relevant for proper acrosome attachment to the nuclear envelope.

Its subcellular location is the nucleus inner membrane. May play a role in sperm acrosome biogenesis. The protein is Protein FAM209A of Homo sapiens (Human).